Reading from the N-terminus, the 417-residue chain is Serine hydroxymethyltransferase (417 aa).

(6S)-5,6,7,8-tetrahydrofolate-binding positions include Leu-121 and 125-127 (GHL). Position 229 is an N6-(pyridoxal phosphate)lysine (Lys-229). Position 355-357 (355-357 (SPF)) interacts with (6S)-5,6,7,8-tetrahydrofolate.

Belongs to the SHMT family. In terms of assembly, homodimer. It depends on pyridoxal 5'-phosphate as a cofactor.

Its subcellular location is the cytoplasm. It catalyses the reaction (6R)-5,10-methylene-5,6,7,8-tetrahydrofolate + glycine + H2O = (6S)-5,6,7,8-tetrahydrofolate + L-serine. The protein operates within one-carbon metabolism; tetrahydrofolate interconversion. Its pathway is amino-acid biosynthesis; glycine biosynthesis; glycine from L-serine: step 1/1. Catalyzes the reversible interconversion of serine and glycine with tetrahydrofolate (THF) serving as the one-carbon carrier. This reaction serves as the major source of one-carbon groups required for the biosynthesis of purines, thymidylate, methionine, and other important biomolecules. Also exhibits THF-independent aldolase activity toward beta-hydroxyamino acids, producing glycine and aldehydes, via a retro-aldol mechanism. The polypeptide is Serine hydroxymethyltransferase (Salmonella arizonae (strain ATCC BAA-731 / CDC346-86 / RSK2980)).